A 353-amino-acid chain; its full sequence is L-tryptophan dehydrogenase (353 aa).

R44 contributes to the NAD(+) binding site. The active-site Proton donor/acceptor is the K80. NAD(+) is bound by residues D114, T146, 176–181 (GLGNVG), K204, and 255–257 (AAN).

It belongs to the Glu/Leu/Phe/Val dehydrogenases family. In terms of assembly, homodimer.

The catalysed reaction is L-tryptophan + NAD(+) + H2O = indole-3-pyruvate + NH4(+) + NADH + H(+). Its activity is regulated as follows. Highly susceptible to inhibition by indole-3-pyruvate. Activity is not affected by the presence of metal ions, EDTA, KCl or DMSO. In terms of biological role, catalyzes the reversible oxidative deamination of L-tryptophan to indole-3-pyruvate in the presence of NAD(+). Shows weak activity with L-phenylalanine, but cannot use other L-amino acids and D-Trp. Cannot use NADP(+) for oxidative deamination of L-Trp, and shows only weak activity with NADPH for reductive amination of indole-3-pyruvate. Involved in the biosynthesis of scytonemin, a cyanobacterial radiation-absorbing pigment. This chain is L-tryptophan dehydrogenase, found in Nostoc punctiforme.